The following is a 301-amino-acid chain: MFDVFGFYKFKKLTSLKKNKILLQDYLIKKNIRGTIIIANEGVNATISGKANDLKSTITKIKKILNFKKFDSENISKSKFQPFHKPKVKIKKEVVPMGLSLSSKNKKNNHIDPKKWNKLINDKDTLVLDSRKPFEYNVGTFKRSVNPDVANFREFPKYLNKLKKTKPIAMFCTGGIRCEKASVFLEKKGFKNVYQLKGGILNYLKNIKKKESLWNGECFVFDNRISVKHGLITGTYSMCSGCRKPVSPKDKKSKKYEEGVSCVNCHDNLTQTQKERFRMRQKQINLAKKTGSKHIFQKEFK.

The Rhodanese domain maps to 121-212 (NDKDTLVLDS…YLKNIKKKES (92 aa)). The active-site Cysteine persulfide intermediate is the cysteine 172.

It belongs to the TrhO family.

The enzyme catalyses uridine(34) in tRNA + AH2 + O2 = 5-hydroxyuridine(34) in tRNA + A + H2O. Its function is as follows. Catalyzes oxygen-dependent 5-hydroxyuridine (ho5U) modification at position 34 in tRNAs. The chain is tRNA uridine(34) hydroxylase from Pelagibacter ubique (strain HTCC1062).